The primary structure comprises 904 residues: DNA mismatch repair protein MutS (904 aa).

Position 655–662 (655–662 (GPNMGGKS)) interacts with ATP.

Belongs to the DNA mismatch repair MutS family.

Its function is as follows. This protein is involved in the repair of mismatches in DNA. It is possible that it carries out the mismatch recognition step. This protein has a weak ATPase activity. The sequence is that of DNA mismatch repair protein MutS from Agrobacterium fabrum (strain C58 / ATCC 33970) (Agrobacterium tumefaciens (strain C58)).